The sequence spans 451 residues: Probable D-serine dehydratase (451 aa).

The disordered stretch occupies residues 1–55; it reads MPGRTRPSCRLAITFTPRPDSATPRAGRAAPATGRRSNRSRSTLSATASPMPRRP. Positions 22–35 are enriched in low complexity; the sequence is ATPRAGRAAPATGR. Lys-118 bears the N6-(pyridoxal phosphate)lysine mark.

This sequence belongs to the serine/threonine dehydratase family. DsdA subfamily. Pyridoxal 5'-phosphate is required as a cofactor.

It catalyses the reaction D-serine = pyruvate + NH4(+). This is Probable D-serine dehydratase from Paracidovorax citrulli (strain AAC00-1) (Acidovorax citrulli).